Reading from the N-terminus, the 436-residue chain is Acetyl-CoA decarbonylase/synthase complex subunit delta 1 (436 aa).

The protein belongs to the CdhD family. In terms of assembly, heterodimer of delta and gamma chains. The ACDS complex is made up of alpha, epsilon, beta, gamma and delta chains with a probable stoichiometry of (alpha(2)epsilon(2))(4)-beta(8)-(gamma(1)delta(1))(8) (Potential).

Its pathway is one-carbon metabolism; methanogenesis from acetate. In terms of biological role, part of a complex that catalyzes the reversible cleavage of acetyl-CoA, allowing growth on acetate as sole source of carbon and energy. Probably maintains the overall quaternary structure of the ACDS complex. The protein is Acetyl-CoA decarbonylase/synthase complex subunit delta 1 (cdhD1) of Methanosarcina thermophila.